Here is a 90-residue protein sequence, read N- to C-terminus: YcgL domain-containing protein YE2368 (90 aa).

Residues 1 to 85 (MLCAIYRSPK…PPESLLKMHL (85 aa)) form the YcgL domain.

The protein is YcgL domain-containing protein YE2368 of Yersinia enterocolitica serotype O:8 / biotype 1B (strain NCTC 13174 / 8081).